The chain runs to 85 residues: Small ribosomal subunit protein uS17 (85 aa).

It belongs to the universal ribosomal protein uS17 family. In terms of assembly, part of the 30S ribosomal subunit.

Functionally, one of the primary rRNA binding proteins, it binds specifically to the 5'-end of 16S ribosomal RNA. The sequence is that of Small ribosomal subunit protein uS17 from Geobacter metallireducens (strain ATCC 53774 / DSM 7210 / GS-15).